Consider the following 128-residue polypeptide: Small ribosomal subunit protein uS11 (128 aa).

This sequence belongs to the universal ribosomal protein uS11 family. Part of the 30S ribosomal subunit. Interacts with proteins S7 and S18. Binds to IF-3.

Functionally, located on the platform of the 30S subunit, it bridges several disparate RNA helices of the 16S rRNA. Forms part of the Shine-Dalgarno cleft in the 70S ribosome. This is Small ribosomal subunit protein uS11 from Desulfosudis oleivorans (strain DSM 6200 / JCM 39069 / Hxd3) (Desulfococcus oleovorans).